A 136-amino-acid chain; its full sequence is MLQPKRTKFRKVMTGRNRGLAKGTEVSFGDFGLKAVGRGRLTARQIEAARRAMTRHIKRQGQIWIRVFPDKPITEKPLEVRQGKGKGNVEYWVAQIQPGKVMYEMNGVPEELAREAFRLAARKLPIKTTFVTKQVM.

The protein belongs to the universal ribosomal protein uL16 family. In terms of assembly, part of the 50S ribosomal subunit.

In terms of biological role, binds 23S rRNA and is also seen to make contacts with the A and possibly P site tRNAs. The protein is Large ribosomal subunit protein uL16 of Aliivibrio fischeri (strain ATCC 700601 / ES114) (Vibrio fischeri).